The following is a 367-amino-acid chain: Alginate lyase (367 aa).

An N-terminal signal peptide occupies residues 1–24; that stretch reads MTIINRKTAPALLALALFGGAAQA. Substrate-binding positions include 63 to 64, 136 to 137, and Tyr-254; these read SK and HT.

It belongs to the polysaccharide lyase 5 family.

The protein localises to the periplasm. The enzyme catalyses Eliminative cleavage of alginate to give oligosaccharides with 4-deoxy-alpha-L-erythro-hex-4-enuronosyl groups at their non-reducing ends and beta-D-mannuronate at their reducing end.. Catalyzes the depolymerization of alginate by cleaving the beta-1,4 glycosidic bond between two adjacent sugar residues via a beta-elimination mechanism. May serve to degrade mislocalized alginate that is trapped in the periplasmic space. This Pseudomonas entomophila (strain L48) protein is Alginate lyase.